The chain runs to 292 residues: Protease HtpX (292 aa).

A run of 2 helical transmembrane segments spans residues 5-25 (IFLF…VMSL) and 34-54 (SGLL…SLLL). Zn(2+) is bound at residue H140. The active site involves E141. H144 provides a ligand contact to Zn(2+). 2 consecutive transmembrane segments (helical) span residues 155–175 (LLQG…GGII) and 193–213 (IIVF…AMWF). E218 contributes to the Zn(2+) binding site.

This sequence belongs to the peptidase M48B family. The cofactor is Zn(2+).

The protein localises to the cell inner membrane. In Xanthomonas axonopodis pv. citri (strain 306), this protein is Protease HtpX.